The sequence spans 677 residues: Galactocerebrosidase (677 aa).

An N-terminal signal peptide occupies residues 1-33 (MGTVPAGSRRAPGCGEGMFILCLALLLAPGAPA). Residues threonine 101, tryptophan 143, and asparagine 189 each coordinate substrate. The active-site Proton donor/acceptor is the glutamate 190. Glutamate 265 functions as the Nucleophile in the catalytic mechanism. Residues cysteine 278 and cysteine 385 are joined by a disulfide bond. 3 N-linked (GlcNAc...) asparagine glycosylation sites follow: asparagine 291, asparagine 370, and asparagine 381. Arginine 387 contacts substrate. Asparagine 394, asparagine 399, asparagine 424, asparagine 441, asparagine 509, asparagine 549, and asparagine 630 each carry an N-linked (GlcNAc...) asparagine glycan.

It belongs to the glycosyl hydrolase 59 family.

Its subcellular location is the lysosome. It catalyses the reaction a beta-D-galactosyl-(1&lt;-&gt;1')-N-acylsphing-4-enine + H2O = an N-acylsphing-4-enine + D-galactose. The catalysed reaction is beta-D-galactosyl-(1&lt;-&gt;1)-sphing-4-enine + H2O = sphing-4-enine + D-galactose. The enzyme catalyses a D-galactosylceramide + H2O = an N-acyl-sphingoid base + D-galactose. Functionally, hydrolyzes the galactose ester bonds of glycolipids such as galactosylceramide and galactosylsphingosine. The sequence is that of Galactocerebrosidase from Xenopus laevis (African clawed frog).